We begin with the raw amino-acid sequence, 313 residues long: MLDNVLRIATRQSPLALWQAHYVKDKLMASHPGLVVELVPMVTRGDVILDTPLAKVGGKGLFVKELEVALLENRADIAVHSMKDVPVEFPQGLGLVTICEREDPRDAFVSNNYDSLDALPAGSIVGTSSLRRQCQLAERRPDLIIRSLRGNVGTRLSKLDNGEYDAIILAVAGLKRLGLESRIRAALPPEISLPAVGQGAVGIECRLDDTRTRELLAALNHHETALRVTAERAMNTRLEGGCQVPIGSYAELIDGEIWLCALVGAPDGSQIIRGERRGAPQDAEQMGISLAEELLNNGAREILAEVYNGEAPA.

At cysteine 242 the chain carries S-(dipyrrolylmethanemethyl)cysteine.

It belongs to the HMBS family. Monomer. Dipyrromethane serves as cofactor.

It catalyses the reaction 4 porphobilinogen + H2O = hydroxymethylbilane + 4 NH4(+). Its pathway is porphyrin-containing compound metabolism; protoporphyrin-IX biosynthesis; coproporphyrinogen-III from 5-aminolevulinate: step 2/4. Its function is as follows. Tetrapolymerization of the monopyrrole PBG into the hydroxymethylbilane pre-uroporphyrinogen in several discrete steps. This is Porphobilinogen deaminase from Shigella flexneri.